We begin with the raw amino-acid sequence, 113 residues long: 14 kDa zinc-binding protein (113 aa).

One can recognise an HIT domain in the interval 3–113 (IFGKIISKEI…GGRQMNWPPG (111 aa)). The Histidine triad motif motif lies at 97 to 101 (HIHVH).

In terms of assembly, homodimer.

This is 14 kDa zinc-binding protein from Brassica juncea (Indian mustard).